The sequence spans 443 residues: Ribosomal protein uS12 methylthiotransferase RimO (443 aa).

In terms of domain architecture, MTTase N-terminal spans 9–119; that stretch reads PKIGMVSLGC…VVSAVHDAAP (111 aa). [4Fe-4S] cluster is bound by residues cysteine 18, cysteine 54, cysteine 83, cysteine 150, cysteine 154, and cysteine 157. The Radical SAM core domain maps to 136 to 373; sequence LTPRHYSYLK…MEKAAQISEA (238 aa). The TRAM domain occupies 376–443; the sequence is QAKIGRDIAT…EHDLFGVALS (68 aa).

Belongs to the methylthiotransferase family. RimO subfamily. [4Fe-4S] cluster serves as cofactor.

Its subcellular location is the cytoplasm. The enzyme catalyses L-aspartate(89)-[ribosomal protein uS12]-hydrogen + (sulfur carrier)-SH + AH2 + 2 S-adenosyl-L-methionine = 3-methylsulfanyl-L-aspartate(89)-[ribosomal protein uS12]-hydrogen + (sulfur carrier)-H + 5'-deoxyadenosine + L-methionine + A + S-adenosyl-L-homocysteine + 2 H(+). In terms of biological role, catalyzes the methylthiolation of an aspartic acid residue of ribosomal protein uS12. This is Ribosomal protein uS12 methylthiotransferase RimO from Zymomonas mobilis subsp. mobilis (strain ATCC 31821 / ZM4 / CP4).